Consider the following 617-residue polypeptide: UvrABC system protein C (617 aa).

A GIY-YIG domain is found at 11-85 (TTPGVYIFRK…IKQHRPHYNV (75 aa)). The 36-residue stretch at 194 to 229 (APVIARLKEDMKVAAQGQDFEQAARLRDRVQAVEKL) folds into the UVR domain.

This sequence belongs to the UvrC family. As to quaternary structure, interacts with UvrB in an incision complex.

The protein localises to the cytoplasm. Functionally, the UvrABC repair system catalyzes the recognition and processing of DNA lesions. UvrC both incises the 5' and 3' sides of the lesion. The N-terminal half is responsible for the 3' incision and the C-terminal half is responsible for the 5' incision. This is UvrABC system protein C from Deinococcus radiodurans (strain ATCC 13939 / DSM 20539 / JCM 16871 / CCUG 27074 / LMG 4051 / NBRC 15346 / NCIMB 9279 / VKM B-1422 / R1).